The primary structure comprises 430 residues: Replication factor C large subunit (430 aa).

ATP is bound at residue 75–82; the sequence is GPPGTGKT.

Belongs to the activator 1 small subunits family. RfcL subfamily. As to quaternary structure, heteromultimer composed of small subunits (RfcS) and large subunits (RfcL).

In terms of biological role, part of the RFC clamp loader complex which loads the PCNA sliding clamp onto DNA. The sequence is that of Replication factor C large subunit from Nanoarchaeum equitans (strain Kin4-M).